We begin with the raw amino-acid sequence, 295 residues long: Trimeric intracellular cation channel type A (295 aa).

The Lumenal portion of the chain corresponds to 1–18 (MEVLDVLNLGEIAQYFSK). A helical transmembrane segment spans residues 19-37 (MAMFPVFDVAYYIVSILYL). Over 38–51 (KYEPGAVEVSRRSP) the chain is Cytoplasmic. The helical transmembrane segment at 52 to 75 (VASWLCAMLYCFGSYILADIMLGV) threads the bilayer. Gly74 provides a ligand contact to Ca(2+). Residues 76–86 (CPIDYFHNNSH) lie on the Lumenal side of the membrane. The helical transmembrane segment at 87–106 (ILLASAVWYLIFFCPLNLFY) threads the bilayer. The Cytoplasmic segment spans residues 107–144 (KCVAFMPVKLVLVALKEVVRTRKIAAGVHHAHHAYHHG). 2 residues coordinate a 1,2-diacyl-sn-glycero-3-phospho-(1D-myo-inositol-4,5-bisphosphate): Lys122 and Arg126. A helical transmembrane segment spans residues 145–162 (WLIMVITGYVKGSGVALM). Residues 163-182 (SNFEQLLRGVWKPETNEVLN) are Lumenal-facing. A helical membrane pass occupies residues 183–199 (MSFPTKASLYGAILFTL). At 200–210 (QEAHVLPVSKS) the chain is on the cytoplasmic side. Residues 211–227 (TLICLFTLFMVSSKVFM) form a helical membrane-spanning segment. The Lumenal segment spans residues 228-236 (TARHSHGSP). Residues 237-255 (FALIESWVCHVLFGSPLGT) traverse the membrane as a helical segment. Residues 256-295 (EDAHDHHHAAPAAAPAPLSPAKNKEELSEGTRKRKSKKAE) are Cytoplasmic-facing. The disordered stretch occupies residues 259-295 (HDHHHAAPAAAPAPLSPAKNKEELSEGTRKRKSKKAE). A compositionally biased stretch (low complexity) spans 265-276 (APAAAPAPLSPA). Positions 277–286 (KNKEELSEGT) are enriched in basic and acidic residues.

This sequence belongs to the TMEM38 family. Homotrimer; conformation seems to be controled by binding to diacylglycerol (DAG).

The protein localises to the sarcoplasmic reticulum membrane. Its subcellular location is the nucleus membrane. The enzyme catalyses K(+)(in) = K(+)(out). Channel activity is activated by a change of voltage within the sarcoplasmic reticulum lumen and blocked by luminal high Ca(2+) levels. Intracellular monovalent cation channel required for maintenance of rapid intracellular calcium release. Acts as a potassium counter-ion channel that functions in synchronization with calcium release from intracellular stores. Opened by a change of voltage within the sarcoplasmic reticulum lumen. This is Trimeric intracellular cation channel type A (tmem38a) from Danio rerio (Zebrafish).